Here is a 205-residue protein sequence, read N- to C-terminus: Thiamine-phosphate synthase (205 aa).

4-amino-2-methyl-5-(diphosphooxymethyl)pyrimidine is bound by residues 34 to 38 (QLRCK) and N66. Positions 67 and 86 each coordinate Mg(2+). S105 serves as a coordination point for 4-amino-2-methyl-5-(diphosphooxymethyl)pyrimidine. 131-133 (TTT) is a binding site for 2-[(2R,5Z)-2-carboxy-4-methylthiazol-5(2H)-ylidene]ethyl phosphate. K134 contributes to the 4-amino-2-methyl-5-(diphosphooxymethyl)pyrimidine binding site. A 2-[(2R,5Z)-2-carboxy-4-methylthiazol-5(2H)-ylidene]ethyl phosphate-binding site is contributed by G163.

The protein belongs to the thiamine-phosphate synthase family. The cofactor is Mg(2+).

The enzyme catalyses 2-[(2R,5Z)-2-carboxy-4-methylthiazol-5(2H)-ylidene]ethyl phosphate + 4-amino-2-methyl-5-(diphosphooxymethyl)pyrimidine + 2 H(+) = thiamine phosphate + CO2 + diphosphate. The catalysed reaction is 2-(2-carboxy-4-methylthiazol-5-yl)ethyl phosphate + 4-amino-2-methyl-5-(diphosphooxymethyl)pyrimidine + 2 H(+) = thiamine phosphate + CO2 + diphosphate. It carries out the reaction 4-methyl-5-(2-phosphooxyethyl)-thiazole + 4-amino-2-methyl-5-(diphosphooxymethyl)pyrimidine + H(+) = thiamine phosphate + diphosphate. It participates in cofactor biosynthesis; thiamine diphosphate biosynthesis; thiamine phosphate from 4-amino-2-methyl-5-diphosphomethylpyrimidine and 4-methyl-5-(2-phosphoethyl)-thiazole: step 1/1. Functionally, condenses 4-methyl-5-(beta-hydroxyethyl)thiazole monophosphate (THZ-P) and 2-methyl-4-amino-5-hydroxymethyl pyrimidine pyrophosphate (HMP-PP) to form thiamine monophosphate (TMP). This is Thiamine-phosphate synthase from Neisseria meningitidis serogroup A / serotype 4A (strain DSM 15465 / Z2491).